The chain runs to 461 residues: Cysteine--tRNA ligase (461 aa).

Cys-28 contributes to the Zn(2+) binding site. The 'HIGH' region signature appears at 30 to 40 (VTIYDLCHIGH). Zn(2+)-binding residues include Cys-209, His-234, and Glu-238. The 'KMSKS' region motif lies at 266-270 (KMSKS). Lys-269 provides a ligand contact to ATP.

It belongs to the class-I aminoacyl-tRNA synthetase family. In terms of assembly, monomer. Zn(2+) serves as cofactor.

Its subcellular location is the cytoplasm. It carries out the reaction tRNA(Cys) + L-cysteine + ATP = L-cysteinyl-tRNA(Cys) + AMP + diphosphate. This is Cysteine--tRNA ligase from Edwardsiella ictaluri (strain 93-146).